The sequence spans 140 residues: Large ribosomal subunit protein uL16 (140 aa).

This sequence belongs to the universal ribosomal protein uL16 family. In terms of assembly, part of the 50S ribosomal subunit.

Its function is as follows. Binds 23S rRNA and is also seen to make contacts with the A and possibly P site tRNAs. This Phytoplasma mali (strain AT) protein is Large ribosomal subunit protein uL16.